A 235-amino-acid chain; its full sequence is Ribonuclease PH (235 aa).

Phosphate contacts are provided by residues R86 and 124-126; that span reads GTR.

Belongs to the RNase PH family. As to quaternary structure, homohexameric ring arranged as a trimer of dimers.

It carries out the reaction tRNA(n+1) + phosphate = tRNA(n) + a ribonucleoside 5'-diphosphate. Its function is as follows. Phosphorolytic 3'-5' exoribonuclease that plays an important role in tRNA 3'-end maturation. Removes nucleotide residues following the 3'-CCA terminus of tRNAs; can also add nucleotides to the ends of RNA molecules by using nucleoside diphosphates as substrates, but this may not be physiologically important. Probably plays a role in initiation of 16S rRNA degradation (leading to ribosome degradation) during starvation. This chain is Ribonuclease PH, found in Francisella tularensis subsp. mediasiatica (strain FSC147).